Reading from the N-terminus, the 385-residue chain is MSDHSPLALAQALIRCPSVTPEEGGALSFLADRLSRAGFSVERPVFSEPGTPDIQNLYARIGTAGPVLVFAGHTDVVPPGETEAWTHGPFSGEVADGFLYGRGAVDMKGGIACMLAATLAFLDRHRPDFGGSIAFLVTGDEEGPAVNGTVKLLDWAKARGERFDHCLLGEPTNPDTLGEMIKIGRRGSLTGRITVHGRQGHVAYPHRAENPIPGLLRLASALTADPLDGGTAHFDASNLEFTTIDVGNPATNVIPASAKAVFNVRFNDDWTADTLGAEIRRRLEAAAGNAVRFSLDLQPSNSPAFLTQPDAFVDRVADAIEAETGRRPALSTTGGTSDARFIKDACPVIEFGLVGRTMHETDERVAVADLDRLTAIYGRVLDAYF.

Histidine 73 is a binding site for Zn(2+). Residue aspartate 75 is part of the active site. Position 106 (aspartate 106) interacts with Zn(2+). The Proton acceptor role is filled by glutamate 141. Positions 142, 170, and 359 each coordinate Zn(2+).

It belongs to the peptidase M20A family. DapE subfamily. In terms of assembly, homodimer. Requires Zn(2+) as cofactor. Co(2+) serves as cofactor.

It carries out the reaction N-succinyl-(2S,6S)-2,6-diaminopimelate + H2O = (2S,6S)-2,6-diaminopimelate + succinate. Its pathway is amino-acid biosynthesis; L-lysine biosynthesis via DAP pathway; LL-2,6-diaminopimelate from (S)-tetrahydrodipicolinate (succinylase route): step 3/3. In terms of biological role, catalyzes the hydrolysis of N-succinyl-L,L-diaminopimelic acid (SDAP), forming succinate and LL-2,6-diaminopimelate (DAP), an intermediate involved in the bacterial biosynthesis of lysine and meso-diaminopimelic acid, an essential component of bacterial cell walls. The chain is Succinyl-diaminopimelate desuccinylase from Methylorubrum extorquens (strain CM4 / NCIMB 13688) (Methylobacterium extorquens).